A 336-amino-acid polypeptide reads, in one-letter code: Glycerol-3-phosphate dehydrogenase [NAD(P)+] (336 aa).

Residues Ser16, Tyr17, His37, and Lys111 each contribute to the NADPH site. Residues Lys111, Gly140, and Thr142 each coordinate sn-glycerol 3-phosphate. Ala144 lines the NADPH pocket. Sn-glycerol 3-phosphate-binding residues include Lys196, Asp249, Ser259, Arg260, and Asn261. Residue Lys196 is the Proton acceptor of the active site. Arg260 lines the NADPH pocket. NADPH is bound by residues Val284 and Glu286.

It belongs to the NAD-dependent glycerol-3-phosphate dehydrogenase family.

The protein localises to the cytoplasm. The catalysed reaction is sn-glycerol 3-phosphate + NAD(+) = dihydroxyacetone phosphate + NADH + H(+). The enzyme catalyses sn-glycerol 3-phosphate + NADP(+) = dihydroxyacetone phosphate + NADPH + H(+). Its pathway is membrane lipid metabolism; glycerophospholipid metabolism. Functionally, catalyzes the reduction of the glycolytic intermediate dihydroxyacetone phosphate (DHAP) to sn-glycerol 3-phosphate (G3P), the key precursor for phospholipid synthesis. This is Glycerol-3-phosphate dehydrogenase [NAD(P)+] from Actinobacillus pleuropneumoniae serotype 5b (strain L20).